The sequence spans 105 residues: Protein S100-A11 (105 aa).

Methionine 1 bears the N-acetylmethionine mark. Alanine 2 carries the post-translational modification N-acetylalanine; in Protein S100-A11, N-terminally processed. An N6-acetyllysine modification is found at lysine 3. 2 positions are modified to phosphoserine: serine 5 and serine 6. Threonine 10 carries the post-translational modification Phosphothreonine. EF-hand domains lie at 13–49 (CIESLIAVFQKYAGKDGYNYTLSKTEFLSFMNTELAA) and 55–90 (KDPGVLDRMMKKLDTNSDGQLDFSEFLNLIGGLAMA). N6-acetyllysine is present on lysine 27. 7 residues coordinate Ca(2+): threonine 33, glutamate 38, aspartate 68, asparagine 70, aspartate 72, glutamine 74, and glutamate 79.

This sequence belongs to the S-100 family. Homodimer; disulfide-linked. In terms of processing, phosphorylation at Thr-10 by PRKCA significantly suppresses homodimerization and promotes association with NCL/nucleolin which induces nuclear translocation.

Its subcellular location is the cytoplasm. The protein resides in the nucleus. Facilitates the differentiation and the cornification of keratinocytes. The polypeptide is Protein S100-A11 (S100A11) (Homo sapiens (Human)).